The chain runs to 394 residues: Phosphoglycerate kinase (394 aa).

Residues 21-23, Arg-36, 59-62, Arg-113, and Arg-146 each bind substrate; these read DLN and HLGR. ATP contacts are provided by residues Lys-197, Glu-319, and 345 to 348; that span reads GGDT.

The protein belongs to the phosphoglycerate kinase family. As to quaternary structure, monomer.

It is found in the cytoplasm. The catalysed reaction is (2R)-3-phosphoglycerate + ATP = (2R)-3-phospho-glyceroyl phosphate + ADP. Its pathway is carbohydrate degradation; glycolysis; pyruvate from D-glyceraldehyde 3-phosphate: step 2/5. The polypeptide is Phosphoglycerate kinase (Halorhodospira halophila (strain DSM 244 / SL1) (Ectothiorhodospira halophila (strain DSM 244 / SL1))).